The chain runs to 249 residues: MAYDIISDIHGCYDEMIALMQKLGYEVKDGTPVHSEDRTLVFAGDLTDRGPKSVEVMRFVAKAYEKGAVRYVPGNHCNKLYRYLKGNPVKVMHGLETTAAELKELSPADRTEVSRQFIRLYESAPLYDILHNGDLVVAHAGIKADDIGKYSRKVKEFVLYGDITGETHPDGRPVRRDWAAAYEGKAWIVYGHTPVKRPRIVNRTINIDTGCVFGNQLTGFRFPEHETVSVESSMPYDASRFREDHGRQA.

The protein belongs to the PrpE family. Ni(2+) serves as cofactor.

It carries out the reaction P(1),P(4)-bis(5'-guanosyl) tetraphosphate + H2O = GMP + GTP + 2 H(+). In terms of biological role, asymmetrically hydrolyzes Ap4p to yield AMP and ATP. In Bacillus velezensis (strain DSM 23117 / BGSC 10A6 / LMG 26770 / FZB42) (Bacillus amyloliquefaciens subsp. plantarum), this protein is Bis(5'-nucleosyl)-tetraphosphatase PrpE [asymmetrical].